Here is a 507-residue protein sequence, read N- to C-terminus: Fluoroacetaldehyde dehydrogenase (507 aa).

219–225 (GFGIEAG) serves as a coordination point for NAD(+). Active-site residues include Glu263 and Cys302.

The protein belongs to the aldehyde dehydrogenase family. As to quaternary structure, homotetramer.

It carries out the reaction fluoroacetaldehyde + NAD(+) + H2O = fluoroacetate + NADH + 2 H(+). Its function is as follows. Catalyzes the oxidation of fluoroacetaldehyde to fluoroacetate. Has high affinity for fluoroacetate and glycolaldehyde but not for acetaldehyde. The chain is Fluoroacetaldehyde dehydrogenase from Streptantibioticus cattleyicolor (strain ATCC 35852 / DSM 46488 / JCM 4925 / NBRC 14057 / NRRL 8057) (Streptomyces cattleya).